We begin with the raw amino-acid sequence, 425 residues long: Glutamyl-tRNA reductase (425 aa).

Substrate-binding positions include 49-52 (TCNR), S107, 112-114 (EPQ), and Q118. The active-site Nucleophile is C50. 187 to 192 (GAGETI) is an NADP(+) binding site.

This sequence belongs to the glutamyl-tRNA reductase family. In terms of assembly, homodimer.

It catalyses the reaction (S)-4-amino-5-oxopentanoate + tRNA(Glu) + NADP(+) = L-glutamyl-tRNA(Glu) + NADPH + H(+). It functions in the pathway porphyrin-containing compound metabolism; protoporphyrin-IX biosynthesis; 5-aminolevulinate from L-glutamyl-tRNA(Glu): step 1/2. In terms of biological role, catalyzes the NADPH-dependent reduction of glutamyl-tRNA(Glu) to glutamate 1-semialdehyde (GSA). The protein is Glutamyl-tRNA reductase of Pseudomonas putida (strain ATCC 47054 / DSM 6125 / CFBP 8728 / NCIMB 11950 / KT2440).